We begin with the raw amino-acid sequence, 462 residues long: Argininosuccinate lyase (462 aa).

Belongs to the lyase 1 family. Argininosuccinate lyase subfamily.

Its subcellular location is the cytoplasm. The enzyme catalyses 2-(N(omega)-L-arginino)succinate = fumarate + L-arginine. It functions in the pathway amino-acid biosynthesis; L-arginine biosynthesis; L-arginine from L-ornithine and carbamoyl phosphate: step 3/3. The protein is Argininosuccinate lyase of Bacillus cereus (strain ZK / E33L).